The chain runs to 503 residues: 2-phosphoxylose phosphatase 1 (503 aa).

Residues 1-6 (MLARSR) lie on the Cytoplasmic side of the membrane. A helical; Signal-anchor for type II membrane protein transmembrane segment spans residues 7-27 (FILVLVVGALLAVLSFSLQYL). Over 28–503 (HLIPTNPVAE…YQQACHQTVL (476 aa)) the chain is Lumenal. Positions 38–63 (QRSAGRSRKRVNPVLHTDPPAPDPIR) are disordered. Asn73 is a glycosylation site (N-linked (GlcNAc...) asparagine). Catalysis depends on His98, which acts as the Nucleophile. Asn365 carries N-linked (GlcNAc...) asparagine glycosylation. Asp396 acts as the Proton donor in catalysis. Asn490 carries an N-linked (GlcNAc...) asparagine glycan.

Belongs to the histidine acid phosphatase family.

The protein resides in the golgi apparatus membrane. It catalyses the reaction 3-O-[beta-D-GlcA-(1-&gt;3)-beta-D-Gal-(1-&gt;3)-beta-D-Gal-(1-&gt;4)-beta-D-2-O-P-Xyl]-L-seryl-[protein] + H2O = 3-O-(beta-D-GlcA-(1-&gt;3)-beta-D-Gal-(1-&gt;3)-beta-D-Gal-(1-&gt;4)-beta-D-Xyl)-L-seryl-[protein] + phosphate. Its function is as follows. Responsible for the 2-O-dephosphorylation of xylose in the glycosaminoglycan-protein linkage region of proteoglycans thereby regulating the amount of mature glycosaminoglycan (GAG) chains. Sulfated glycosaminoglycans (GAGs), including heparan sulfate and chondroitin sulfate, are synthesized on the so-called common GAG-protein linkage region (GlcUAbeta1-3Galbeta1-3Galbeta1-4Xylbeta1-O-Ser) of core proteins, which is formed by the stepwise addition of monosaccharide residues by the respective specific glycosyltransferases. The sequence is that of 2-phosphoxylose phosphatase 1 from Danio rerio (Zebrafish).